Reading from the N-terminus, the 239-residue chain is Orotidine 5'-phosphate decarboxylase (239 aa).

Substrate is bound by residues Asp15, Lys37, 64-73 (DLKFHDIPNT), Thr126, Arg187, Gln196, Gly216, and Arg217. The active-site Proton donor is Lys66.

It belongs to the OMP decarboxylase family. Type 1 subfamily. In terms of assembly, homodimer.

The catalysed reaction is orotidine 5'-phosphate + H(+) = UMP + CO2. It functions in the pathway pyrimidine metabolism; UMP biosynthesis via de novo pathway; UMP from orotate: step 2/2. Its function is as follows. Catalyzes the decarboxylation of orotidine 5'-monophosphate (OMP) to uridine 5'-monophosphate (UMP). The sequence is that of Orotidine 5'-phosphate decarboxylase from Geobacter sulfurreducens (strain ATCC 51573 / DSM 12127 / PCA).